A 219-amino-acid chain; its full sequence is Cytidylate kinase (219 aa).

ATP is bound at residue 10–18 (GPAAAGKST).

The protein belongs to the cytidylate kinase family. Type 1 subfamily.

It is found in the cytoplasm. The catalysed reaction is CMP + ATP = CDP + ADP. The enzyme catalyses dCMP + ATP = dCDP + ADP. This is Cytidylate kinase from Staphylococcus aureus (strain JH9).